Consider the following 153-residue polypeptide: Ribosome maturation factor RimP (153 aa).

The protein belongs to the RimP family.

It localises to the cytoplasm. In terms of biological role, required for maturation of 30S ribosomal subunits. The sequence is that of Ribosome maturation factor RimP from Coxiella burnetii (strain RSA 331 / Henzerling II).